Here is a 270-residue protein sequence, read N- to C-terminus: Checkpoint signal transducer rad25 (270 aa).

Residues serine 234 and serine 253 each carry the phosphoserine modification. A disordered region spans residues glutamine 240–alanine 270. The segment covering glutamate 254–alanine 270 has biased composition (basic and acidic residues).

The protein belongs to the 14-3-3 family. Interacts with rad24. Interacts with byr2.

It localises to the cytoplasm. Acts in cell cycle and stress checkpoint signaling by sequestering signal transducers regulated by the checkpoints. Required for the DNA damage checkpoint that ensures that DNA damage is repaired before mitosis is attempted. Sequesters byr2 in the cytoplasm to prevent its translocation to the plasma membrane. The protein is Checkpoint signal transducer rad25 of Schizosaccharomyces pombe (strain 972 / ATCC 24843) (Fission yeast).